The sequence spans 473 residues: Putative tyrosine recombinase XerC (473 aa).

A Core-binding (CB) domain is found at 4 to 82 (MTLPELTQEY…HLRTVYRYAM (79 aa)). Residues 118–305 (RNWLRFLVQE…DYDLMREVMN (188 aa)) enclose the Tyr recombinase domain. Catalysis depends on residues Arg-156, Lys-183, His-256, Arg-259, and His-283. Residue Tyr-292 is the O-(3'-phospho-DNA)-tyrosine intermediate of the active site. Positions 341–352 (SGTELQPATTES) are enriched in polar residues. The segment at 341 to 365 (SGTELQPATTESSEAKKADDTASNP) is disordered.

This sequence belongs to the 'phage' integrase family.

The protein localises to the cytoplasm. In terms of biological role, site-specific tyrosine recombinase, which acts by catalyzing the cutting and rejoining of the recombining DNA molecules. This is Putative tyrosine recombinase XerC from Pseudomonas syringae.